We begin with the raw amino-acid sequence, 688 residues long: Lipase (688 aa).

The signal sequence occupies residues 1–35 (MKTRQNKYSIRKFSVGASSILIAALLFMGGGSAQA). Positions 31–309 (GSAQAAEQQQ…KSAKQKQYKN (279 aa)) are disordered. Positions 36–302 (AEQQQDKGTV…KNEDQTNKSA (267 aa)) are cleaved as a propeptide — removed in mature form. Positions 45–54 (VENSTTQSIG) are enriched in polar residues. Residues 68–79 (NKNVNEKSNVNS) are compositionally biased toward low complexity. Composition is skewed to basic and acidic residues over residues 84–95 (ESLHNETPKNED), 103–117 (SQND…EQNK), and 126–143 (HSEE…KHAS). The segment covering 144–172 (ENNQTLHSKAAQSNEDVKTKPSQLDNTAA) has biased composition (polar residues). The segment covering 173–183 (KQEDSQKENLS) has biased composition (basic and acidic residues). Residues 184 to 211 (KQDTQSSKTTDLLRATAQNQSKDSQSTE) show a composition bias toward polar residues. Over residues 240–267 (SKEEPLKVDKQANPTTDKDKSSKNDKGS) the composition is skewed to basic and acidic residues. A compositionally biased stretch (polar residues) spans 274-289 (LESNAVATTNKQSKQQ). Ser418 acts as the Nucleophile in catalysis. The Charge relay system role is filled by Asp609. Asp647 contributes to the Ca(2+) binding site. His648 functions as the Charge relay system in the catalytic mechanism. Positions 650, 655, and 658 each coordinate Ca(2+).

Belongs to the AB hydrolase superfamily. Lipase family.

Its subcellular location is the secreted. It carries out the reaction a triacylglycerol + H2O = a diacylglycerol + a fatty acid + H(+). The polypeptide is Lipase (lip) (Staphylococcus epidermidis).